We begin with the raw amino-acid sequence, 164 residues long: Thioredoxin domain-containing protein R443 (164 aa).

The helical transmembrane segment at 8–28 (HIVLIVLAIILILWIISLLLC) threads the bilayer. Residues 36 to 163 (YQVPIIQPMQ…LTQFIRSNMN (128 aa)) enclose the Thioredoxin domain. An intrachain disulfide couples cysteine 84 to cysteine 87.

Belongs to the thioredoxin family.

It is found in the host membrane. The protein localises to the virion. In Acanthamoeba polyphaga mimivirus (APMV), this protein is Thioredoxin domain-containing protein R443.